The sequence spans 299 residues: Taste receptor type 2 member 5 (299 aa).

Position 1 (methionine 1) is a topological domain, extracellular. A helical membrane pass occupies residues 2 to 22 (LSAGLGLLMLVAVVEFLIGLI). Over 23–45 (GNGVLVVWSFREWIRKFSWSSYN) the chain is Cytoplasmic. Residues 46-66 (LIILGLAGCRFVLQWLIILDL) traverse the membrane as a helical segment. The Extracellular segment spans residues 67 to 82 (SLFPLFQSSRWLRYLS). A helical membrane pass occupies residues 83-103 (IFWVLVSQASLWFATFLSVFY). Residues 104 to 127 (CKKITTFDHPAYLWLKQRAYNLSL) are Cytoplasmic-facing. Residues 128 to 148 (WCLLGYFIINLLLTVQIGLMF) form a helical membrane-spanning segment. Residues 149–175 (YHPPQGNSSIRYPFESWQYLYAFRLNS) are Extracellular-facing. An N-linked (GlcNAc...) asparagine glycan is attached at asparagine 155. The chain crosses the membrane as a helical span at residues 176-196 (GSYLPLMVFLVSSGMLIVSLY). Residues 197–223 (THHKKMKVHSAGRRDVRAKAHITALKS) lie on the Cytoplasmic side of the membrane. Residues 224 to 244 (LGCFLLLHLVYIMASPFSIAS) traverse the membrane as a helical segment. Topologically, residues 245–253 (KTYPPDLTS) are extracellular. The chain crosses the membrane as a helical span at residues 254-274 (VFIWETLMAAYPSLHSLILIM). At 275–299 (GIPRVKQTCQKIXWKTVCARRCWGP) the chain is on the cytoplasmic side.

It belongs to the G-protein coupled receptor T2R family.

It localises to the membrane. Functionally, receptor that may play a role in the perception of bitterness and is gustducin-linked. May play a role in sensing the chemical composition of the gastrointestinal content. The activity of this receptor may stimulate alpha gustducin, mediate PLC-beta-2 activation and lead to the gating of TRPM5. The chain is Taste receptor type 2 member 5 (TAS2R5) from Pan troglodytes (Chimpanzee).